The sequence spans 145 residues: Major pollen allergen Lig v 1 (145 aa).

3 disulfide bridges follow: Cys-19–Cys-90, Cys-22–Cys-131, and Cys-43–Cys-78. Asn-111 is a glycosylation site (N-linked (GlcNAc...) asparagine).

The protein belongs to the Ole e I family.

Its subcellular location is the secreted. This Ligustrum vulgare (Common privet) protein is Major pollen allergen Lig v 1.